Reading from the N-terminus, the 842-residue chain is Probable cleavage and polyadenylation specificity factor subunit 2 (842 aa).

A compositionally biased stretch (basic and acidic residues) spans 414 to 425 (AEETRIRMERAR). 2 disordered regions span residues 414–442 (AEETRIRMERARRQAQANESDDSDDDDIA) and 708–747 (METFQDDQNKQEASEENVAEGEKSNGQSKENDENASSIPI). The span at 432-441 (ESDDSDDDDI) shows a compositional bias: acidic residues. Residues 731 to 747 (SNGQSKENDENASSIPI) are compositionally biased toward polar residues.

Belongs to the metallo-beta-lactamase superfamily. RNA-metabolizing metallo-beta-lactamase-like family. CPSF2/YSH1 subfamily. CPSF is a heterotetramer composed of four distinct subunits 160, 100, 70 and 30 kDa.

It localises to the nucleus. Its function is as follows. CPSF plays a key role in pre-mRNA 3'-end formation, recognizing the AAUAAA signal sequence and interacting with poly(A)polymerase and other factors to bring about cleavage and poly(A) addition. This is Probable cleavage and polyadenylation specificity factor subunit 2 from Caenorhabditis briggsae.